The primary structure comprises 557 residues: MVHRLPVFKRYMGNTPQKKAVFGQCRGLPCVAPLLTTVEEAPRGISARVRGHFPKWLNGSLLRTGPGKFEFGKDKYNHWFDGMALLHQFRMAKGTVTYRSKFLQSDTYKANSAKNRIVISEFGTLALPDPCKNVFERFMSRFELPGKAAAMTDNTNVNYVRYKGDYYLCTETNFMNKVDIETLEKTEKVDWSKFIAVNGATAHPHYDPDGTAYNMGNSFGPYGFSYKVIRVPPEKVDLGETIHGAQVICSIASTEKGKPSYYHSFGMTRNYIIFIEQPLKMNLWKIATSKIRGKAFSDGISWEPQCNTWFHVVDKRTGQLLPGRYYSKPFVTFHQINAFEDQGCVIIDLCCQDNGRTLEVYQLQNLRKAGEGLDQVYNSAAKSFPRRFVLPLNVSLNAPEGDNLSPLSYTSASAVKQADGTIWCSHENLHQEDLEKEGGIEFPQIYYDQFSGKKYHFFYGCGFRHLVGGDSLIKVDVVNKTLKVWREDGFYPSEPVFVPAPGTNEEDGGVILSVVITPNQNESNFLLVLDAKNFGELGRAEVPVQMPYGFHGTFIPI.

Fe cation contacts are provided by His-203, His-263, His-334, and His-551.

This sequence belongs to the carotenoid oxygenase family. Fe(2+) serves as cofactor.

It is found in the mitochondrion. It catalyses the reaction all-trans-beta-carotene + O2 = beta-ionone + all-trans-10'-apo-beta-carotenal. The enzyme catalyses 5-cis-lycopene + O2 = 5-cis-10'-apo-lycopenal + (3E,5E)-6,10-dimethylundeca-3,5,9-trien-2-one. The catalysed reaction is 13-cis-lycopene + O2 = 13-cis-10'-apo-lycopenal + (3E,5E)-6,10-dimethylundeca-3,5,9-trien-2-one. It carries out the reaction lutein + O2 = (3R,6R)-hydroxy-alpha-ionone + (3R)-3-hydroxy-10'-apo-beta-carotenal. It catalyses the reaction lutein + O2 = (3R,6R)-3-hydroxy-10'-apo-alpha-carotenal + (3R)-hydroxy-beta-ionone. The enzyme catalyses all-trans-zeaxanthin + 2 O2 = 4,9-dimethyldodeca-2,4,6,8,10-pentaenedial + 2 (3R)-hydroxy-beta-ionone. The catalysed reaction is all-trans-zeaxanthin + O2 = (3R)-3-hydroxy-10'-apo-beta-carotenal + (3R)-hydroxy-beta-ionone. It carries out the reaction beta-cryptoxanthin + O2 = all-trans-10'-apo-beta-carotenal + (3R)-hydroxy-beta-ionone. It catalyses the reaction all-trans-10'-apo-beta-carotenal + O2 = beta-ionone + 4,9-dimethyldodeca-2,4,6,8,10-pentaenedial. The enzyme catalyses (3R)-3-hydroxy-10'-apo-beta-carotenal + O2 = 4,9-dimethyldodeca-2,4,6,8,10-pentaenedial + (3R)-hydroxy-beta-ionone. The catalysed reaction is (3R,6R)-3-hydroxy-10'-apo-alpha-carotenal + O2 = (3R,6R)-hydroxy-alpha-ionone + 4,9-dimethyldodeca-2,4,6,8,10-pentaenedial. In terms of biological role, broad specificity mitochondrial dioxygenase that mediates the asymmetric oxidative cleavage of carotenoids. Cleaves carotenes (pure hydrocarbon carotenoids) such as all-trans-beta-carotene and lycopene as well as xanthophylls (oxygenated carotenoids) such as zeaxanthin, lutein and beta-cryptoxanthin at both the 9,10 and the 9',10' carbon-carbon double bond. Through its function in carotenoids metabolism regulates oxidative stress and the production of important signaling molecules. This is Carotenoid-cleaving dioxygenase, mitochondrial from Pongo abelii (Sumatran orangutan).